Reading from the N-terminus, the 56-residue chain is Ovomucoid (56 aa).

Residues 6 to 56 enclose the Kazal-like domain; sequence VDCSEYPKPACTLEYRPLCGSDSKTYANKCNFCNAVVESNGTLTLSHFGKC. 3 disulfide bridges follow: cysteine 8/cysteine 38, cysteine 16/cysteine 35, and cysteine 24/cysteine 56. Asparagine 45 carries an N-linked (GlcNAc...) asparagine glycan.

The protein localises to the secreted. This is Ovomucoid from Oreortyx pictus (Mountain quail).